Here is a 439-residue protein sequence, read N- to C-terminus: tRNA(Ile)-lysidine synthase (439 aa).

25–30 (SGGLDS) provides a ligand contact to ATP.

This sequence belongs to the tRNA(Ile)-lysidine synthase family.

It is found in the cytoplasm. It carries out the reaction cytidine(34) in tRNA(Ile2) + L-lysine + ATP = lysidine(34) in tRNA(Ile2) + AMP + diphosphate + H(+). Functionally, ligates lysine onto the cytidine present at position 34 of the AUA codon-specific tRNA(Ile) that contains the anticodon CAU, in an ATP-dependent manner. Cytidine is converted to lysidine, thus changing the amino acid specificity of the tRNA from methionine to isoleucine. The chain is tRNA(Ile)-lysidine synthase from Edwardsiella ictaluri (strain 93-146).